The following is a 211-amino-acid chain: Holliday junction resolvase RecU (211 aa).

Residues Thr-95, Asp-97, Glu-110, and Gln-129 each coordinate Mg(2+).

It belongs to the RecU family. Mg(2+) is required as a cofactor.

The protein localises to the cytoplasm. It catalyses the reaction Endonucleolytic cleavage at a junction such as a reciprocal single-stranded crossover between two homologous DNA duplexes (Holliday junction).. Its function is as follows. Endonuclease that resolves Holliday junction intermediates in genetic recombination. Cleaves mobile four-strand junctions by introducing symmetrical nicks in paired strands. Promotes annealing of linear ssDNA with homologous dsDNA. Required for DNA repair, homologous recombination and chromosome segregation. The sequence is that of Holliday junction resolvase RecU from Lactobacillus acidophilus (strain ATCC 700396 / NCK56 / N2 / NCFM).